A 333-amino-acid chain; its full sequence is PDZ domain-containing protein GIPC1 (333 aa).

A compositionally biased stretch (basic residues) spans 1 to 11 (MPLGLGRRKKA). The interval 1-53 (MPLGLGRRKKAPPLVENEEAEPSRSGLGVGEPGPLGGSAAGESQMGLPPPPAA) is disordered. The segment covering 27–39 (LGVGEPGPLGGSA) has biased composition (gly residues). S68 is modified (phosphoserine). The region spanning 133 to 213 (EVEVFKSEEA…GRTFTLKLTE (81 aa)) is the PDZ domain. Residues S222, S225, and S232 each carry the phosphoserine modification. Residues 223-244 (QRSAGGHPGSGPQLGTGRGTLR) are disordered. Residues 228-240 (GHPGSGPQLGTGR) are compositionally biased toward gly residues. T242 is modified (phosphothreonine). S247 carries the post-translational modification Phosphoserine.

This sequence belongs to the GIPC family. In terms of assembly, interacts with GLUT1 (C-terminus), ACTN1, KIF1B, MYO6 and PLEKHG5. Interacts with RGS19 C-terminus. Interacts with SDC4/syndecan-4 and SEMA4C/semaphorin-4C. In terms of tissue distribution, widely expressed.

The protein localises to the cytoplasm. The protein resides in the membrane. Functionally, inhibits endothelial cell migration (in vitro). May be involved in G protein-linked signaling. In Mus musculus (Mouse), this protein is PDZ domain-containing protein GIPC1 (Gipc1).